A 211-amino-acid polypeptide reads, in one-letter code: MCPGNWLWASVTFMARFSRSGSRSPVRVRGALEEPPAVQHPFLNVFELERLLYTGKTACNHADEVWPGLYLGDQEIANNHRELRRLGITHVLNASHSRWRGTPEAYEGLGIRYLGVEAHDSPAFDMSVHFQAAADFIHRALSQPGGRILVHCAVGVSRSATLVLAYLMLYHRLTLVEAIKKVKDHRGIIPNRGFLRQLLALDRRLRQGLEA.

The Tyrosine-protein phosphatase domain maps to 60–207 (NHADEVWPGL…LLALDRRLRQ (148 aa)). Residue C152 is the Phosphocysteine intermediate of the active site.

The protein belongs to the protein-tyrosine phosphatase family. Non-receptor class dual specificity subfamily. In terms of assembly, interacts with HSF4.

Its subcellular location is the cytoplasm. It is found in the nucleus. The protein localises to the golgi apparatus. It catalyses the reaction O-phospho-L-tyrosyl-[protein] + H2O = L-tyrosyl-[protein] + phosphate. It carries out the reaction O-phospho-L-seryl-[protein] + H2O = L-seryl-[protein] + phosphate. The enzyme catalyses O-phospho-L-threonyl-[protein] + H2O = L-threonyl-[protein] + phosphate. In terms of biological role, inactivates MAPK1 and MAPK3 which leads to dephosphorylation of heat shock factor protein 4 and a reduction in its DNA-binding activity. This is Dual specificity protein phosphatase 26 (DUSP26) from Bos taurus (Bovine).